A 473-amino-acid chain; its full sequence is JmjC domain-containing protein 4 (473 aa).

One can recognise a JmjC domain in the interval 140-433 (PTDGLLTDFS…DFDHPYLDRN (294 aa)). The disordered stretch occupies residues 452 to 473 (TNKKNEKRPAEDDSPSQKKTCQ).

Its subcellular location is the nucleus. Functionally, has a role in meiosis. This chain is JmjC domain-containing protein 4 (jmj4), found in Schizosaccharomyces pombe (strain 972 / ATCC 24843) (Fission yeast).